We begin with the raw amino-acid sequence, 206 residues long: Large ribosomal subunit protein uL4 (206 aa).

Residues 51–76 (AKTRAEVSGGGIKPWRQKGTGRARQG) are disordered.

The protein belongs to the universal ribosomal protein uL4 family. Part of the 50S ribosomal subunit.

Its function is as follows. One of the primary rRNA binding proteins, this protein initially binds near the 5'-end of the 23S rRNA. It is important during the early stages of 50S assembly. It makes multiple contacts with different domains of the 23S rRNA in the assembled 50S subunit and ribosome. Forms part of the polypeptide exit tunnel. The polypeptide is Large ribosomal subunit protein uL4 (Clostridium kluyveri (strain ATCC 8527 / DSM 555 / NBRC 12016 / NCIMB 10680 / K1)).